Here is a 116-residue protein sequence, read N- to C-terminus: Large ribosomal subunit protein bL19 (116 aa).

Belongs to the bacterial ribosomal protein bL19 family.

This protein is located at the 30S-50S ribosomal subunit interface and may play a role in the structure and function of the aminoacyl-tRNA binding site. This is Large ribosomal subunit protein bL19 from Pseudomonas savastanoi pv. phaseolicola (strain 1448A / Race 6) (Pseudomonas syringae pv. phaseolicola (strain 1448A / Race 6)).